Reading from the N-terminus, the 493-residue chain is Glutamate--tRNA ligase (493 aa).

The 'HIGH' region signature appears at 10–20 (PSPTGDPHVGT). Positions 251 to 255 (KLSKR) match the 'KMSKS' region motif. Lys254 provides a ligand contact to ATP.

It belongs to the class-I aminoacyl-tRNA synthetase family. Glutamate--tRNA ligase type 1 subfamily. In terms of assembly, monomer.

The protein resides in the cytoplasm. The enzyme catalyses tRNA(Glu) + L-glutamate + ATP = L-glutamyl-tRNA(Glu) + AMP + diphosphate. Its function is as follows. Catalyzes the attachment of glutamate to tRNA(Glu) in a two-step reaction: glutamate is first activated by ATP to form Glu-AMP and then transferred to the acceptor end of tRNA(Glu). The sequence is that of Glutamate--tRNA ligase from Pseudomonas entomophila (strain L48).